A 207-amino-acid chain; its full sequence is Testis-expressed protein 35 (207 aa).

Positions 43–79 form a coiled coil; sequence RKGMTRELKNELREVREQLTEKMEEIKQIKDIMDKDF.

Testis-specific. Expressed during spermatogenesis.

The protein resides in the nucleus. This is Testis-expressed protein 35 (Tex35) from Mus musculus (Mouse).